The following is a 160-amino-acid chain: Transcriptional repressor NrdR (160 aa).

The span at 1 to 11 shows a compositional bias: polar residues; it reads MRCPNCNSLDT. The segment at 1–20 is disordered; it reads MRCPNCNSLDTQVKDSRPTE. A zinc finger lies at 3–34; sequence CPNCNSLDTQVKDSRPTEDSSVIRRRRVCIAC. Positions 49–139 constitute an ATP-cone domain; sequence LTVIKRNGRR…VYRNFREAKD (91 aa).

It belongs to the NrdR family. Zn(2+) serves as cofactor.

Its function is as follows. Negatively regulates transcription of bacterial ribonucleotide reductase nrd genes and operons by binding to NrdR-boxes. In Rhodopseudomonas palustris (strain BisB5), this protein is Transcriptional repressor NrdR.